Reading from the N-terminus, the 287-residue chain is UTP--glucose-1-phosphate uridylyltransferase 1 (287 aa).

It belongs to the UDPGP type 2 family.

It carries out the reaction alpha-D-glucose 1-phosphate + UTP + H(+) = UDP-alpha-D-glucose + diphosphate. The protein operates within glycolipid metabolism; diglucosyl-diacylglycerol biosynthesis. Its function is as follows. Catalyzes the formation of UDP-glucose from glucose-1-phosphate and UTP. This is an intermediate step in the biosynthesis of diglucosyl-diacylglycerol (Glc2-DAG), i.e. a glycolipid found in the membrane, which is also used as a membrane anchor for lipoteichoic acid (LTA). This Staphylococcus saprophyticus subsp. saprophyticus (strain ATCC 15305 / DSM 20229 / NCIMB 8711 / NCTC 7292 / S-41) protein is UTP--glucose-1-phosphate uridylyltransferase 1 (gtaB1).